The following is a 502-amino-acid chain: Phenylacetaldehyde dehydrogenase (502 aa).

251 to 256 provides a ligand contact to NAD(+); that stretch reads GSTEVG. Catalysis depends on residues Glu-273 and Cys-307.

The protein belongs to the aldehyde dehydrogenase family.

The enzyme catalyses 2-phenylacetaldehyde + NAD(+) + H2O = 2-phenylacetate + NADH + 2 H(+). It participates in aromatic compound metabolism. Its function is as follows. Phenylacetaldehyde dehydrogenase that catalyzes the last step in the aerobic styrene degradation pathway by mediating oxidation of phenylacetaldehyde to phenylacetic acid. The sequence is that of Phenylacetaldehyde dehydrogenase (styD) from Pseudomonas fluorescens.